We begin with the raw amino-acid sequence, 404 residues long: Serine/threonine transporter SstT (404 aa).

Transmembrane regions (helical) follow at residues 17-37 (IGIG…VTAI), 44-64 (FVGA…VQAI), 75-95 (MTLI…VAVI), 138-158 (ALAT…GLAL), 179-199 (IVVW…FSTV), 212-232 (LLIL…NPLL), 287-307 (IPLG…VLTL), 319-339 (FLTA…ASGV), and 354-374 (FGIS…VGVI).

This sequence belongs to the dicarboxylate/amino acid:cation symporter (DAACS) (TC 2.A.23) family.

The protein localises to the cell membrane. It catalyses the reaction L-serine(in) + Na(+)(in) = L-serine(out) + Na(+)(out). It carries out the reaction L-threonine(in) + Na(+)(in) = L-threonine(out) + Na(+)(out). Involved in the import of serine and threonine into the cell, with the concomitant import of sodium (symport system). The sequence is that of Serine/threonine transporter SstT from Streptococcus equi subsp. zooepidemicus (strain H70).